Consider the following 459-residue polypeptide: Vacuolar amino acid transporter 5 (459 aa).

Helical transmembrane passes span 8-28 (GVLT…PFAF), 33-53 (LMPG…GLLL), 82-102 (VVFD…YLII), 131-151 (FLDR…PLCF), 161-181 (ASMI…YHFV), 206-226 (LTTL…FSVI), 240-260 (IPIF…GTGY), and 278-298 (SIST…AFPL). Polar residues predominate over residues 335 to 351 (FNSEDPQEAPTQQNNEE). The tract at residues 335–354 (FNSEDPQEAPTQQNNEEPNL) is disordered. The next 3 membrane-spanning stretches (helical) occupy residues 364–384 (IITL…TSLA), 386–406 (VLAI…PGLF), and 434–454 (LSLF…IVFL).

This sequence belongs to the amino acid/polyamine transporter 2 family.

It is found in the vacuole membrane. In terms of biological role, probable amino acid transporter of unknown specificity. This Saccharomyces cerevisiae (strain ATCC 204508 / S288c) (Baker's yeast) protein is Vacuolar amino acid transporter 5 (AVT5).